We begin with the raw amino-acid sequence, 218 residues long: MEHDYLISLLVIVGIDLILGGDNAVVIAMASRHLPDKQRQQAIILGTFIAVAMRIGLTSAAVYLLNIPFLQCAGGIFLLYLGYQLLIEKKDTKHIKSSTSLWRAIRTIVLADLFMSLDNVIAVAGASHGEFSLVVIGLCVSVPVIIWGSKLIHIALEKIPLLIYAGSGLLAYTGGEMIVRDKKLSLFMAQHGTVETLLPILTVAFVILASIYYQQVEK.

Transmembrane regions (helical) follow at residues 9-29 (LLVI…VIAM), 42-62 (AIIL…SAAV), 67-87 (IPFL…QLLI), 107-127 (TIVL…AGAS), 134-154 (VVIG…LIHI), 159-179 (IPLL…EMIV), and 192-212 (GTVE…ASIY).

The protein belongs to the TerC family.

It is found in the cell membrane. This is an uncharacterized protein from Bacillus subtilis (strain 168).